The primary structure comprises 188 residues: Pro-adrenomedullin (188 aa).

A signal peptide spans 1–21; the sequence is MKLVPVALLYLGSLAFLGADT. Arg-41 is subject to Arginine amide. Residues 45–92 constitute a propeptide that is removed on maturation; the sequence is ELRVSSSYPTGLAEVKAGPAQTLIRTQDVKGASRNPQTSGPDAARIRV. A disulfide bond links Cys-110 and Cys-115. The interval 131–176 is disordered; the sequence is DKDGVAPRSKISPQGYGRRRRRSLPEPGLRRTLLFPEPRPGGAPAP. The residue at position 146 (Tyr-146) is a Tyrosine amide. The propeptide at 153–188 is preproAM C-terminal fragment; sequence SLPEPGLRRTLLFPEPRPGGAPAPRAHQVLANLLKM.

This sequence belongs to the adrenomedullin family.

It localises to the secreted. In terms of biological role, adrenomedullin/ADM and proadrenomedullin N-20 terminal peptide/PAMP are peptide hormones that act as potent hypotensive and vasodilatator agents. Numerous actions have been reported most related to the physiologic control of fluid and electrolyte homeostasis. ADM function is mediated by the CALCRL-RAMP2 and CALCRL-RAMP3 receptor complexes with ADM showing the highest potency for the CALCRL-RAMP2 complex. The polypeptide is Pro-adrenomedullin (ADM) (Canis lupus familiaris (Dog)).